Here is a 226-residue protein sequence, read N- to C-terminus: Imidazoleglycerol-phosphate dehydratase (226 aa).

The disordered stretch occupies residues 23 to 55; that stretch reads LTGGPIERPQPSLFASEKGANTAGPDDASQTTA.

The protein belongs to the imidazoleglycerol-phosphate dehydratase family.

The catalysed reaction is D-erythro-1-(imidazol-4-yl)glycerol 3-phosphate = 3-(imidazol-4-yl)-2-oxopropyl phosphate + H2O. The protein operates within amino-acid biosynthesis; L-histidine biosynthesis; L-histidine from 5-phospho-alpha-D-ribose 1-diphosphate: step 6/9. The chain is Imidazoleglycerol-phosphate dehydratase (HIS3) from Maudiozyma humilis (Sour dough yeast).